Reading from the N-terminus, the 396-residue chain is Peptide chain release factor 1, mitochondrial (396 aa).

Residue Q268 is modified to N5-methylglutamine. The interval L317–I340 is disordered.

It belongs to the prokaryotic/mitochondrial release factor family. Post-translationally, methylation of glutamine in the GGQ triplet is conserved from bacteria to mammals.

The protein resides in the mitochondrion. Its function is as follows. Mitochondrial peptide chain release factor that directs the termination of translation in response to the peptide chain termination codons UAA and UAG. This chain is Peptide chain release factor 1, mitochondrial (MRF1), found in Kluyveromyces lactis (strain ATCC 8585 / CBS 2359 / DSM 70799 / NBRC 1267 / NRRL Y-1140 / WM37) (Yeast).